The primary structure comprises 194 residues: dITP/XTP pyrophosphatase (194 aa).

Residue 8 to 13 (TSNPGK) participates in substrate binding. The Mg(2+) site is built by E38 and D67. D67 acts as the Proton acceptor in catalysis. Substrate contacts are provided by residues S68, 152–155 (FGYD), K175, and 180–181 (HR).

Belongs to the HAM1 NTPase family. Homodimer. Mg(2+) serves as cofactor.

It catalyses the reaction XTP + H2O = XMP + diphosphate + H(+). It carries out the reaction dITP + H2O = dIMP + diphosphate + H(+). The catalysed reaction is ITP + H2O = IMP + diphosphate + H(+). Functionally, pyrophosphatase that catalyzes the hydrolysis of nucleoside triphosphates to their monophosphate derivatives, with a high preference for the non-canonical purine nucleotides XTP (xanthosine triphosphate), dITP (deoxyinosine triphosphate) and ITP. Seems to function as a house-cleaning enzyme that removes non-canonical purine nucleotides from the nucleotide pool, thus preventing their incorporation into DNA/RNA and avoiding chromosomal lesions. This Legionella pneumophila (strain Lens) protein is dITP/XTP pyrophosphatase.